We begin with the raw amino-acid sequence, 58 residues long: Sec-independent protein translocase protein TatA (58 aa).

A helical transmembrane segment spans residues 1-21 (MLSNIGFPGLILILVAILILF).

Belongs to the TatA/E family. In terms of assembly, forms a complex with TatC.

It localises to the cell membrane. In terms of biological role, part of the twin-arginine translocation (Tat) system that transports large folded proteins containing a characteristic twin-arginine motif in their signal peptide across membranes. TatA could form the protein-conducting channel of the Tat system. This is Sec-independent protein translocase protein TatA from Bacillus cytotoxicus (strain DSM 22905 / CIP 110041 / 391-98 / NVH 391-98).